A 55-amino-acid polypeptide reads, in one-letter code: Large ribosomal subunit protein bL33 (55 aa).

The protein belongs to the bacterial ribosomal protein bL33 family.

This Rhodospirillum centenum (strain ATCC 51521 / SW) protein is Large ribosomal subunit protein bL33.